The sequence spans 427 residues: Glycophorin-binding protein-related antigen (427 aa).

8 GBP repeats span residues 109–149 (LTSA…DELE), 150–189 (TSAD…DEVE), 190–229 (SSAD…DELE), 230–269 (TSAD…EVET), 270–307 (SADP…SEVE), 308–347 (TSAD…DELE), 348–387 (TSAD…DELE), and 388–427 (TSAD…DESS).

The protein is Glycophorin-binding protein-related antigen (GBPH) of Plasmodium falciparum (isolate FCBR / Columbia).